Consider the following 276-residue polypeptide: Probable ABC transporter permease protein PH1036 (276 aa).

A run of 6 helical transmembrane segments spans residues 12–32 (IAWS…MASV), 75–95 (IVAI…AYAF), 109–129 (FIVL…YFLL), 137–157 (TFRG…IFFM), 186–206 (IVLP…FTWV), and 241–261 (GLLT…YALF). Residues 70–261 (LKNSLIVAIP…LVPLLVYALF (192 aa)) enclose the ABC transmembrane type-1 domain.

The protein belongs to the binding-protein-dependent transport system permease family. MalFG subfamily.

Its subcellular location is the cell membrane. Functionally, probably part of a binding-protein-dependent transport system PH1036/38/39. Probably responsible for the translocation of the substrate across the membrane. The polypeptide is Probable ABC transporter permease protein PH1036 (Pyrococcus horikoshii (strain ATCC 700860 / DSM 12428 / JCM 9974 / NBRC 100139 / OT-3)).